A 310-amino-acid polypeptide reads, in one-letter code: D-alanyl-D-alanine endopeptidase (310 aa).

The N-terminal stretch at 1 to 25 (MPKFRVSLFSLALMLAVPFAPQAVA) is a signal peptide. The active-site Acyl-ester intermediate is Ser-67. The active-site Proton acceptor is Lys-70. The active site involves Ser-124. Lys-231 provides a ligand contact to substrate.

This sequence belongs to the peptidase S11 family. Pbp8 is a proteolytic product of Pbp7.

The protein localises to the periplasm. Functionally, cell wall formation. May play a specialized role in remodeling the cell wall. Specifically hydrolyzes the DD-diaminopimelate-alanine bonds in high-molecular-mass murein sacculi. In Escherichia coli (strain K12), this protein is D-alanyl-D-alanine endopeptidase (pbpG).